Here is a 720-residue protein sequence, read N- to C-terminus: uncharacterized protein (720 aa).

A lipid anchor (N-myristoyl glycine; by host) is attached at glycine 2.

This is an uncharacterized protein from Cryphonectria parasitica mycoreovirus 1 (strain 9B21) (CpMYRV-1).